Here is a 591-residue protein sequence, read N- to C-terminus: MLRSHAAGSLRSSDAGQQVTLAGWVARRRDHGGVIFIDLRDASGITQVVFRDPDVLKQAHRLRAEFCVAVAGLVEIRPEGNANPEIATGDIEVNASSLTVLGESAPLPFQLDEPAGEELRLKYRYLDLRRDAPAAAIRLRSKVNAAAREVLDRHDFVEIETPTITRSTPEGARDFLVPARLHPGSFYALPQSPQLFKQLLMVAGMERYYQIARCYRDEDFRADRQPEFTQLDMEMSFVDAEDVIAISEEILAALWALIGYEIPRPIPRISYADAMARYGSDKPDLRFGLELVECSEFFKDTTFRVFQAPYVGAVVMPGGASQPRRTLDGWQEWAKQRGAKGLAYVLVGEDGELGGPVAKNLSEAERAGLAGHVGAAPGDCIFFAAGPAKPSRALLGAARSEIAHRLGLIDPQAWAFVWVVDPPLFEPADDATAAGDVAVGSGAWTAVHHAFTAPKPGYEDAIETDTGNVLADAYDIVCNGNEIGGGSIRIHRRDIQERVFAVMGLDNAEAREKFGFLLEAFTFGAPPHGGIAFGWDRINALLSRVDSIREVIAFPKTGGGVDPLTDAPAPITEQQRKESGIDVKPEPSKPH.

An L-aspartate-binding site is contributed by Glu170. Residues Gln194–Lys197 are aspartate. L-aspartate is bound at residue Arg216. Residues Arg216–Glu218 and Gln225 contribute to the ATP site. His448 contributes to the L-aspartate binding site. Residue Glu482 participates in ATP binding. L-aspartate is bound at residue Arg489. Gly534 to Arg537 provides a ligand contact to ATP. Residues Gly559–His591 form a disordered region. The segment covering Gln574–His591 has biased composition (basic and acidic residues).

It belongs to the class-II aminoacyl-tRNA synthetase family. Type 1 subfamily. As to quaternary structure, homodimer.

It is found in the cytoplasm. It catalyses the reaction tRNA(Asx) + L-aspartate + ATP = L-aspartyl-tRNA(Asx) + AMP + diphosphate. Its function is as follows. Aspartyl-tRNA synthetase with relaxed tRNA specificity since it is able to aspartylate not only its cognate tRNA(Asp) but also tRNA(Asn). Reaction proceeds in two steps: L-aspartate is first activated by ATP to form Asp-AMP and then transferred to the acceptor end of tRNA(Asp/Asn). This Mycobacterium avium (strain 104) protein is Aspartate--tRNA(Asp/Asn) ligase.